The sequence spans 79 residues: uncharacterized protein (79 aa).

Residues 15 to 37 (KSIVSVLALTSLGCGVFVISATA) traverse the membrane as a helical segment.

The protein resides in the membrane. This is an uncharacterized protein from Dictyostelium discoideum (Social amoeba).